Reading from the N-terminus, the 287-residue chain is Probable F-box protein At5g04010 (287 aa).

Residues 50-101 form the F-box; degenerate domain; that stretch reads PSPPSWEILCLVGPYMDPESLAVASCVSTTWSKCFSSEDLWKSLPATRHSIF.

The polypeptide is Probable F-box protein At5g04010 (NSFBx) (Arabidopsis thaliana (Mouse-ear cress)).